The primary structure comprises 119 residues: E3 ubiquitin-protein ligase PPP1R11 (119 aa).

The interval 1-42 is disordered; sequence MAESSGPTAGGGATSSTVTTESDTQPEHRSLTLKLRKRKPDK. Atypical RING finger domain stretches follow at residues 55–65 and 87–96; these read NLGRRSSKCCC and CESAHCIRGH. A disordered region spans residues 96–119; sequence HKKATSGSKETPSSHHDKTGSMQH. The segment covering 107-119 has biased composition (basic and acidic residues); it reads PSSHHDKTGSMQH.

The enzyme catalyses S-ubiquitinyl-[E2 ubiquitin-conjugating enzyme]-L-cysteine + [acceptor protein]-L-lysine = [E2 ubiquitin-conjugating enzyme]-L-cysteine + N(6)-ubiquitinyl-[acceptor protein]-L-lysine.. It participates in protein modification; protein ubiquitination. Atypical E3 ubiquitin-protein ligase which ubiquitinates TLR2 at 'Lys-754' leading to its degradation by the proteasome. Inhibitor of protein phosphatase 1. This Xenopus tropicalis (Western clawed frog) protein is E3 ubiquitin-protein ligase PPP1R11 (ppp1r11).